Reading from the N-terminus, the 217-residue chain is Probable GTP-binding protein EngB (217 aa).

Positions 24–207 (SQPEICFAGR…HELIESWLIP (184 aa)) constitute an EngB-type G domain. GTP contacts are provided by residues 32–39 (GRSNAGKS), 59–63 (GRTQH), 81–84 (DLPG), 148–151 (TKCD), and 185–188 (LFSA). Residues Ser-39 and Thr-61 each contribute to the Mg(2+) site.

This sequence belongs to the TRAFAC class TrmE-Era-EngA-EngB-Septin-like GTPase superfamily. EngB GTPase family. Mg(2+) is required as a cofactor.

Necessary for normal cell division and for the maintenance of normal septation. This is Probable GTP-binding protein EngB from Paraburkholderia phytofirmans (strain DSM 17436 / LMG 22146 / PsJN) (Burkholderia phytofirmans).